The following is a 157-amino-acid chain: SsrA-binding protein (157 aa).

It belongs to the SmpB family.

It localises to the cytoplasm. In terms of biological role, required for rescue of stalled ribosomes mediated by trans-translation. Binds to transfer-messenger RNA (tmRNA), required for stable association of tmRNA with ribosomes. tmRNA and SmpB together mimic tRNA shape, replacing the anticodon stem-loop with SmpB. tmRNA is encoded by the ssrA gene; the 2 termini fold to resemble tRNA(Ala) and it encodes a 'tag peptide', a short internal open reading frame. During trans-translation Ala-aminoacylated tmRNA acts like a tRNA, entering the A-site of stalled ribosomes, displacing the stalled mRNA. The ribosome then switches to translate the ORF on the tmRNA; the nascent peptide is terminated with the 'tag peptide' encoded by the tmRNA and targeted for degradation. The ribosome is freed to recommence translation, which seems to be the essential function of trans-translation. The polypeptide is SsrA-binding protein (Clostridium novyi (strain NT)).